Reading from the N-terminus, the 841-residue chain is Translation initiation factor IF-2 (841 aa).

Residues 94–255 (QRSPEEIEAE…RNAHGFQSPT (162 aa)) are disordered. A compositionally biased stretch (basic and acidic residues) spans 96–135 (SPEEIEAERKREMDERRAVENAARQKAEEEAKRRAEEDAR). Residues 136-175 (NQPAAGQPASAPAQPVAAAEPVREAPAAAAPAPASAAPSA) show a composition bias toward low complexity. Composition is skewed to basic and acidic residues over residues 176 to 217 (DARK…EKAP) and 225 to 234 (TTDEESDSFR). The segment covering 235 to 248 (RGGRGKGKLKKRNA) has biased composition (basic residues). In terms of domain architecture, tr-type G spans 341-510 (SRAPVVTVMG…LLQAEVLELK (170 aa)). Residues 350 to 357 (GHVDHGKT) form a G1 region. 350–357 (GHVDHGKT) lines the GTP pocket. The interval 375-379 (GITQH) is G2. Residues 396 to 399 (DTPG) are G3. GTP-binding positions include 396–400 (DTPGH) and 450–453 (NKID). Positions 450–453 (NKID) are G4. The interval 486–488 (SAK) is G5.

It belongs to the TRAFAC class translation factor GTPase superfamily. Classic translation factor GTPase family. IF-2 subfamily.

The protein resides in the cytoplasm. One of the essential components for the initiation of protein synthesis. Protects formylmethionyl-tRNA from spontaneous hydrolysis and promotes its binding to the 30S ribosomal subunits. Also involved in the hydrolysis of GTP during the formation of the 70S ribosomal complex. This is Translation initiation factor IF-2 from Pseudomonas syringae pv. tomato (strain ATCC BAA-871 / DC3000).